The following is a 137-amino-acid chain: Large ribosomal subunit protein uL16 (137 aa).

This sequence belongs to the universal ribosomal protein uL16 family. Part of the 50S ribosomal subunit.

In terms of biological role, binds 23S rRNA and is also seen to make contacts with the A and possibly P site tRNAs. The polypeptide is Large ribosomal subunit protein uL16 (Roseobacter denitrificans (strain ATCC 33942 / OCh 114) (Erythrobacter sp. (strain OCh 114))).